A 318-amino-acid chain; its full sequence is NADH-ubiquinone oxidoreductase chain 1 (318 aa).

8 helical membrane passes run 2-22 (FMIN…FLTL), 70-90 (MFIL…IPLP), 100-120 (LGVL…LWSG), 147-167 (AIIL…TLII), 172-192 (TWLI…TLAE), 222-242 (LFFM…AILF), 253-273 (ELYT…FLWI), and 294-314 (LPLT…TSGI).

The protein belongs to the complex I subunit 1 family. Core subunit of respiratory chain NADH dehydrogenase (Complex I) which is composed of 45 different subunits.

Its subcellular location is the mitochondrion inner membrane. The catalysed reaction is a ubiquinone + NADH + 5 H(+)(in) = a ubiquinol + NAD(+) + 4 H(+)(out). Its function is as follows. Core subunit of the mitochondrial membrane respiratory chain NADH dehydrogenase (Complex I) which catalyzes electron transfer from NADH through the respiratory chain, using ubiquinone as an electron acceptor. Essential for the catalytic activity and assembly of complex I. This chain is NADH-ubiquinone oxidoreductase chain 1 (MT-ND1), found in Bos mutus grunniens (Wild yak).